The sequence spans 251 residues: Probable transcriptional regulatory protein MMAR_2098 (251 aa).

This sequence belongs to the TACO1 family.

Its subcellular location is the cytoplasm. This Mycobacterium marinum (strain ATCC BAA-535 / M) protein is Probable transcriptional regulatory protein MMAR_2098.